The following is a 592-amino-acid chain: Beta-xylosidase (592 aa).

Positions 1 to 19 are cleaved as a signal peptide; that stretch reads MYLNACRALTLISVLSLLA. A lipid anchor (N-palmitoyl cysteine) is attached at Cys20. Cys20 carries S-diacylglycerol cysteine lipidation.

It belongs to the glycosyl hydrolase 43 family.

It is found in the cell outer membrane. Xylosidase involved in ulvan degradation. Ulvan is the main polysaccharide component of the Ulvales (green seaweed) cell wall. It is composed of disaccharide building blocks comprising 3-sulfated rhamnose (Rha3S) linked to D-glucuronic acid (GlcA), L-iduronic acid (IduA), or D-xylose (Xyl). Beta-xylosidase converts Xyl-Rha3S, a product of alpha-L-rhamnosidase acting on Rha-Xyl-Rha3S oligosaccharides, further to Xyl and Rha3S. The polypeptide is Beta-xylosidase (Formosa agariphila (strain DSM 15362 / KCTC 12365 / LMG 23005 / KMM 3901 / M-2Alg 35-1)).